The following is a 726-amino-acid chain: MDTFITRNFQTTIIQKAKNTMAEFSEDPELQPAMLFNICVHLEVCYVISDMNFLDEEGKTYTALEGQGKEQNLRPQYEVIEGMPRNIAWMVQRSLAQEHGIETPRYLADLFDYKTKRFIEVGITKGLADDYFWKKKEKLGNSMELMIFSYNQDYSLSNEHSLDEEGKGRVLSRLTELQAELSLKNLWQVLIGEEDIEKGIDFKLGQTISKLRDISVPAGFSNFEGMRSYIDNIDPKGAIERNLARMSPLVSVTPKKLKWEDLRPIGPHIYSHELPEVPYNAFLLMSDELGLANMTEGKSKKPKTLAKECLEKYSTLRDQTDPILIMKSEKANENFLWKLWRDCVNTISNEETSNELQKTNYAKWATGDGLTYQKIMKEVAIDDETMYQEEPKIPNKCRVAAWVQTEMNLLSTLTSKRALDLPEIGPDVAPVEHVGSERRKYFVNEINYCKASTVMMKYVLFHTSLLNESNASMGKYKVIPITNRVVNEKGESFDILYGLAVKGQSHLRGDTDVVTVVTFEFSSTDPRVDSGKWPKYTVFRIGSLFVSGREKSVYLYCRVNGTNKIQMKWGMEARRCLLQSMQQMEAIVDQESSIQGYDMTKACFKGDRVNSPKTFSIGTQEGKLVKGSFGKALRVIFTKCLMHYVFGNAQLEGFSAESRRLLLLIQALKDRKGPWVFDLEGMYSGIEECISNNPWVIQSAYWFNEWLGFEKEGSKVLESIDEIMDE.

Mn(2+)-binding residues include H41, E81, D109, E120, and V121. The Nuclear localization signal 1 (NLS1) motif lies at 125–140; sequence KGLADDYFWKKKEKLG. The Nuclear localization signal 2 (NLS2) motif lies at 183-244; that stretch reads LKNLWQVLIG…PKGAIERNLA (62 aa).

The protein belongs to the influenza viruses PA family. Influenza RNA polymerase is composed of three subunits: PB1, PB2 and PA. Interacts (via C-terminus) with PB1 (via N-terminus). The cofactor is Mn(2+). In terms of processing, phosphorylated on serines and threonines by host kinases, including human casein kinase II.

It is found in the host cytoplasm. Its subcellular location is the host nucleus. Its function is as follows. Plays an essential role in viral RNA transcription and replication by forming the heterotrimeric polymerase complex together with PB1 and PB2 subunits. The complex transcribes viral mRNAs by using a unique mechanism called cap-snatching. It consists in the hijacking and cleavage of host capped pre-mRNAs. These short capped RNAs are then used as primers for viral mRNAs. The PB2 subunit is responsible for the binding of the 5' cap of cellular pre-mRNAs which are subsequently cleaved after 10-13 nucleotides by the PA subunit that carries the endonuclease activity. The chain is Polymerase acidic protein from Homo sapiens (Human).